The following is a 471-amino-acid chain: Phosphatidate cytidylyltransferase 3 (471 aa).

Positions 1-72 (MAMEKDLSPN…HRRRSSENLA (72 aa)) are disordered. Positions 21–35 (SYPTTPTSRMNTNNQ) are enriched in polar residues. A run of 8 helical transmembrane segments spans residues 97–116 (WIRTCSSLWMLGGVVFIIYM), 120–139 (YIWAMVVVIQIFMAKELFFL), 149–169 (LPGFWLLNWHFFFTAMLFVYG), 196–216 (YQMVICYFLYIAGLIWFILTL), 228–250 (YAWTHMILIVVFTQSSFTVANIF), 255–277 (WFLLPAALIAMNDVAAYFFGFYF), 293–313 (GFIGASVATIISAFIFANVLG), and 368–388 (FSLGLFASIMAPFGGFFASGF).

It belongs to the CDS family. Mg(2+) serves as cofactor.

It localises to the membrane. It catalyses the reaction a 1,2-diacyl-sn-glycero-3-phosphate + CTP + H(+) = a CDP-1,2-diacyl-sn-glycerol + diphosphate. It participates in phospholipid metabolism; CDP-diacylglycerol biosynthesis; CDP-diacylglycerol from sn-glycerol 3-phosphate: step 3/3. Its function is as follows. May be involved in the synthesis of minor phospholipids and in modulation of IP3-mediated signal transduction. This Arabidopsis thaliana (Mouse-ear cress) protein is Phosphatidate cytidylyltransferase 3.